The following is a 104-amino-acid chain: Large ribosomal subunit protein uL24 (104 aa).

Belongs to the universal ribosomal protein uL24 family. Part of the 50S ribosomal subunit.

One of two assembly initiator proteins, it binds directly to the 5'-end of the 23S rRNA, where it nucleates assembly of the 50S subunit. Its function is as follows. One of the proteins that surrounds the polypeptide exit tunnel on the outside of the subunit. The sequence is that of Large ribosomal subunit protein uL24 from Shigella dysenteriae serotype 1 (strain Sd197).